The following is a 155-amino-acid chain: Cyanate hydratase (155 aa).

Catalysis depends on residues R95, E98, and S121.

The protein belongs to the cyanase family.

The enzyme catalyses cyanate + hydrogencarbonate + 3 H(+) = NH4(+) + 2 CO2. Its function is as follows. Catalyzes the reaction of cyanate with bicarbonate to produce ammonia and carbon dioxide. The sequence is that of Cyanate hydratase from Pseudomonas savastanoi pv. phaseolicola (strain 1448A / Race 6) (Pseudomonas syringae pv. phaseolicola (strain 1448A / Race 6)).